We begin with the raw amino-acid sequence, 131 residues long: Small ribosomal subunit protein uS8 (131 aa).

The protein belongs to the universal ribosomal protein uS8 family. As to quaternary structure, part of the 30S ribosomal subunit. Contacts proteins S5 and S12.

Its function is as follows. One of the primary rRNA binding proteins, it binds directly to 16S rRNA central domain where it helps coordinate assembly of the platform of the 30S subunit. This Albidiferax ferrireducens (strain ATCC BAA-621 / DSM 15236 / T118) (Rhodoferax ferrireducens) protein is Small ribosomal subunit protein uS8.